The primary structure comprises 368 residues: Large ribosomal subunit protein mL46 (368 aa).

A disordered region spans residues 53-81 (TATATTTTTLPPPHPPVTTSTGTHAATST). Low complexity predominate over residues 69 to 81 (VTTSTGTHAATST).

Belongs to the mitochondrion-specific ribosomal protein mL46 family. As to quaternary structure, component of the mitochondrial large ribosomal subunit (mt-LSU). Mature N.crassa 74S mitochondrial ribosomes consist of a small (37S) and a large (54S) subunit. The 37S small subunit contains a 16S ribosomal RNA (16S mt-rRNA) and 32 different proteins. The 54S large subunit contains a 23S rRNA (23S mt-rRNA) and 42 different proteins.

It localises to the mitochondrion. Its function is as follows. Component of the mitochondrial ribosome (mitoribosome), a dedicated translation machinery responsible for the synthesis of mitochondrial genome-encoded proteins, including at least some of the essential transmembrane subunits of the mitochondrial respiratory chain. The mitoribosomes are attached to the mitochondrial inner membrane and translation products are cotranslationally integrated into the membrane. The sequence is that of Large ribosomal subunit protein mL46 (mrpl17) from Neurospora crassa (strain ATCC 24698 / 74-OR23-1A / CBS 708.71 / DSM 1257 / FGSC 987).